The primary structure comprises 277 residues: Formamidopyrimidine-DNA glycosylase (277 aa).

The active-site Schiff-base intermediate with DNA is the proline 2. The active-site Proton donor is the glutamate 3. The Proton donor; for beta-elimination activity role is filled by lysine 59. Positions 96, 115, and 158 each coordinate DNA. The FPG-type zinc finger occupies 243 to 277; sequence WVYGRGGNPCRRCGGEILREKRAGRSTHFCPRCQK. Arginine 267 serves as the catalytic Proton donor; for delta-elimination activity.

The protein belongs to the FPG family. As to quaternary structure, monomer. It depends on Zn(2+) as a cofactor.

It carries out the reaction Hydrolysis of DNA containing ring-opened 7-methylguanine residues, releasing 2,6-diamino-4-hydroxy-5-(N-methyl)formamidopyrimidine.. It catalyses the reaction 2'-deoxyribonucleotide-(2'-deoxyribose 5'-phosphate)-2'-deoxyribonucleotide-DNA = a 3'-end 2'-deoxyribonucleotide-(2,3-dehydro-2,3-deoxyribose 5'-phosphate)-DNA + a 5'-end 5'-phospho-2'-deoxyribonucleoside-DNA + H(+). Involved in base excision repair of DNA damaged by oxidation or by mutagenic agents. Acts as a DNA glycosylase that recognizes and removes damaged bases. Has a preference for oxidized purines, such as 7,8-dihydro-8-oxoguanine (8-oxoG). Has AP (apurinic/apyrimidinic) lyase activity and introduces nicks in the DNA strand. Cleaves the DNA backbone by beta-delta elimination to generate a single-strand break at the site of the removed base with both 3'- and 5'-phosphates. The sequence is that of Formamidopyrimidine-DNA glycosylase from Heliobacterium modesticaldum (strain ATCC 51547 / Ice1).